Consider the following 95-residue polypeptide: uncharacterized protein (95 aa).

Residues 3 to 23 form a helical membrane-spanning segment; the sequence is FVIIIAILLLGISLILAFTVL.

Its subcellular location is the membrane. This is an uncharacterized protein from Methanocaldococcus jannaschii (strain ATCC 43067 / DSM 2661 / JAL-1 / JCM 10045 / NBRC 100440) (Methanococcus jannaschii).